Consider the following 1072-residue polypeptide: DNA-directed RNA polymerase subunit beta (1072 aa).

The protein belongs to the RNA polymerase beta chain family. In plastids the minimal PEP RNA polymerase catalytic core is composed of four subunits: alpha, beta, beta', and beta''. When a (nuclear-encoded) sigma factor is associated with the core the holoenzyme is formed, which can initiate transcription.

Its subcellular location is the plastid. The protein resides in the chloroplast. It catalyses the reaction RNA(n) + a ribonucleoside 5'-triphosphate = RNA(n+1) + diphosphate. DNA-dependent RNA polymerase catalyzes the transcription of DNA into RNA using the four ribonucleoside triphosphates as substrates. This chain is DNA-directed RNA polymerase subunit beta, found in Lepidium virginicum (Virginia pepperweed).